The sequence spans 198 residues: Recombination protein RecR (198 aa).

The C4-type zinc finger occupies 57–72 (CDKCNTFTEAQICEVC). In terms of domain architecture, Toprim spans 80 to 175 (TLLCVVETPA…AVTRLARGVP (96 aa)).

The protein belongs to the RecR family.

Functionally, may play a role in DNA repair. It seems to be involved in an RecBC-independent recombinational process of DNA repair. It may act with RecF and RecO. In Burkholderia multivorans (strain ATCC 17616 / 249), this protein is Recombination protein RecR.